The primary structure comprises 300 residues: ATP-dependent (S)-NAD(P)H-hydrate dehydratase (300 aa).

In terms of domain architecture, YjeF C-terminal spans 14-293 (LLALFKTVVP…NQIPSVFQTE (280 aa)). Residues Gly114 and 167–173 (NVMEFQR) contribute to the (6S)-NADPHX site. ATP-binding positions include 198 to 202 (KGAND) and 219 to 228 (GSGRRCGGQG). Asp229 provides a ligand contact to (6S)-NADPHX.

It belongs to the NnrD/CARKD family. Requires Mg(2+) as cofactor.

It catalyses the reaction (6S)-NADHX + ATP = ADP + phosphate + NADH + H(+). The enzyme catalyses (6S)-NADPHX + ATP = ADP + phosphate + NADPH + H(+). Functionally, catalyzes the dehydration of the S-form of NAD(P)HX at the expense of ATP, which is converted to ADP. Together with NAD(P)HX epimerase, which catalyzes the epimerization of the S- and R-forms, the enzyme allows the repair of both epimers of NAD(P)HX, a damaged form of NAD(P)H that is a result of enzymatic or heat-dependent hydration. The protein is ATP-dependent (S)-NAD(P)H-hydrate dehydratase of Drosophila melanogaster (Fruit fly).